We begin with the raw amino-acid sequence, 166 residues long: NAD(P)H-quinone oxidoreductase subunit I, chloroplastic (166 aa).

4Fe-4S ferredoxin-type domains are found at residues 55–84 (GRIH…VDWK) and 95–124 (LNYS…MTEE). Positions 64, 67, 70, 74, 104, 107, 110, and 114 each coordinate [4Fe-4S] cluster.

This sequence belongs to the complex I 23 kDa subunit family. In terms of assembly, NDH is composed of at least 16 different subunits, 5 of which are encoded in the nucleus. [4Fe-4S] cluster serves as cofactor.

It localises to the plastid. Its subcellular location is the chloroplast thylakoid membrane. It carries out the reaction a plastoquinone + NADH + (n+1) H(+)(in) = a plastoquinol + NAD(+) + n H(+)(out). The enzyme catalyses a plastoquinone + NADPH + (n+1) H(+)(in) = a plastoquinol + NADP(+) + n H(+)(out). Its function is as follows. NDH shuttles electrons from NAD(P)H:plastoquinone, via FMN and iron-sulfur (Fe-S) centers, to quinones in the photosynthetic chain and possibly in a chloroplast respiratory chain. The immediate electron acceptor for the enzyme in this species is believed to be plastoquinone. Couples the redox reaction to proton translocation, and thus conserves the redox energy in a proton gradient. This Parthenium hysterophorus (Santa Maria feverfew) protein is NAD(P)H-quinone oxidoreductase subunit I, chloroplastic.